A 537-amino-acid polypeptide reads, in one-letter code: Copine-3 (537 aa).

C2 domains are found at residues 1–115 and 124–247; these read MAAQ…TRPL and GKGS…PVEF. At serine 14 the chain carries Phosphoserine. 7 residues coordinate Ca(2+): aspartate 22, aspartate 28, aspartate 81, aspartate 83, aspartate 93, aspartate 154, and aspartate 160. Serine 197 carries the post-translational modification Phosphoserine. Ca(2+)-binding residues include aspartate 216, aspartate 218, and aspartate 224. Residue serine 243 is modified to Phosphoserine. The VWFA domain occupies 291–513; that stretch reads NFTVGVDFTG…AQCVLAEIPQ (223 aa).

Belongs to the copine family. In terms of assembly, monomer. Interacts with ERBB2 (preferentially with the tyrosine phosphorylated form); this interaction occurs at the cell membrane and is increased in a growth factor heregulin-dependent manner. Interacts with SHC1; this interaction may mediate the binding of CPNE3 with ERBB2. Interacts with RACK1. Requires Ca(2+) as cofactor. In terms of processing, phosphorylated on serine and threonine residues. Expressed in breast and weakly in prostate and ovarian tissues. Expressed in neutrophils (at protein level). Widely expressed. Expressed in the brain. Expressed in neutrophil precursors from the bone marrow and peripheral blood. Expressed in primary breast tumors and ovarian endometrioid adenocarcinoma.

It localises to the nucleus. It is found in the cytoplasm. The protein localises to the cell membrane. The protein resides in the cell junction. Its subcellular location is the focal adhesion. In terms of biological role, calcium-dependent phospholipid-binding protein that plays a role in ERBB2-mediated tumor cell migration in response to growth factor heregulin stimulation. The polypeptide is Copine-3 (Homo sapiens (Human)).